Here is a 382-residue protein sequence, read N- to C-terminus: D-galactonate dehydratase (382 aa).

Aspartate 183 contacts Mg(2+). Histidine 185 (proton donor) is an active-site residue. Positions 209 and 235 each coordinate Mg(2+). Residue histidine 285 is the Proton acceptor of the active site.

Belongs to the mandelate racemase/muconate lactonizing enzyme family. GalD subfamily. The cofactor is Mg(2+).

The catalysed reaction is D-galactonate = 2-dehydro-3-deoxy-D-galactonate + H2O. The protein operates within carbohydrate acid metabolism; D-galactonate degradation; D-glyceraldehyde 3-phosphate and pyruvate from D-galactonate: step 1/3. Functionally, catalyzes the dehydration of D-galactonate to 2-keto-3-deoxy-D-galactonate. This is D-galactonate dehydratase from Escherichia coli O45:K1 (strain S88 / ExPEC).